Reading from the N-terminus, the 96-residue chain is Small ribosomal subunit protein bS21 (96 aa).

The disordered stretch occupies residues 52 to 96 (RRARKQARKTAIREGLIAAPKPKARPVSPRRPAAPAPASSPVGAA). Low complexity predominate over residues 69-96 (AAPKPKARPVSPRRPAAPAPASSPVGAA).

Belongs to the bacterial ribosomal protein bS21 family.

The sequence is that of Small ribosomal subunit protein bS21 from Methylobacterium nodulans (strain LMG 21967 / CNCM I-2342 / ORS 2060).